Consider the following 158-residue polypeptide: Protein-export protein SecB (158 aa).

It belongs to the SecB family. As to quaternary structure, homotetramer, a dimer of dimers. One homotetramer interacts with 1 SecA dimer.

The protein resides in the cytoplasm. In terms of biological role, one of the proteins required for the normal export of preproteins out of the cell cytoplasm. It is a molecular chaperone that binds to a subset of precursor proteins, maintaining them in a translocation-competent state. It also specifically binds to its receptor SecA. The protein is Protein-export protein SecB of Anaplasma phagocytophilum (strain HZ).